The following is a 222-amino-acid chain: Transmembrane reductase CYB561D2 (222 aa).

Residues 2–17 (ALSAETESHIYRALRT) are Cytoplasmic-facing. Positions 14 to 217 (ALRTASGAAA…NQVSNAYLYR (204 aa)) constitute a Cytochrome b561 domain. The chain crosses the membrane as a helical span at residues 18 to 38 (ASGAAAHLVALGFTIFVAVLA). Topologically, residues 39 to 46 (RPGSSLFS) are lumenal. Residues 47–67 (WHPVLMSLAFSFLMTEALLVF) traverse the membrane as a helical segment. His-48 contacts heme b. Over 68–85 (SPESSLLHSLSRKGRARC) the chain is Cytoplasmic. His-86 and His-120 together coordinate heme b. Residues 86-106 (HWVLQLLALLCALLGLGLVIL) traverse the membrane as a helical segment. At 107–122 (HKEQLGKAHLVTRHGQ) the chain is on the lumenal side. The helical transmembrane segment at 123–143 (AGLLAVLWAGLQCSGGVGLLY) threads the bilayer. Residues 144–162 (PKLLPRWPLAKLKLYHATS) are Cytoplasmic-facing. His-159 provides a ligand contact to heme b. The chain crosses the membrane as a helical span at residues 163 to 183 (GLVGYLLGSASLLLGMCSLWF). The Lumenal portion of the chain corresponds to 184–186 (TAS). The helical transmembrane segment at 187–207 (VTGAAWYLAVLCPVLTSLVIM) threads the bilayer. Over 208–222 (NQVSNAYLYRKRIQP) the chain is Cytoplasmic.

The cofactor is heme b.

The protein localises to the endoplasmic reticulum membrane. It localises to the cytoplasmic vesicle membrane. It carries out the reaction monodehydro-L-ascorbate radical(out) + L-ascorbate(in) = monodehydro-L-ascorbate radical(in) + L-ascorbate(out). The enzyme catalyses Fe(3+)(out) + L-ascorbate(in) = monodehydro-L-ascorbate radical(in) + Fe(2+)(out) + H(+). Transmembrane reductase that may use ascorbate as an electron donor in the cytoplasm and transfer electrons across endoplasmic reticulum membranes to reduce monodehydro-L-ascorbate radical and iron cations Fe(3+) in the lumen of that compartment. The chain is Transmembrane reductase CYB561D2 from Homo sapiens (Human).